A 671-amino-acid polypeptide reads, in one-letter code: DNA ligase (671 aa).

NAD(+) is bound by residues 32 to 36 (DAEYD), 81 to 82 (SL), and Glu113. The active-site N6-AMP-lysine intermediate is Lys115. NAD(+) contacts are provided by Arg136, Glu173, Lys290, and Lys314. 4 residues coordinate Zn(2+): Cys408, Cys411, Cys426, and Cys432. A BRCT domain is found at 593–671 (EIDSPFAGKT…EAEMLRLFGE (79 aa)).

This sequence belongs to the NAD-dependent DNA ligase family. LigA subfamily. Mg(2+) serves as cofactor. Requires Mn(2+) as cofactor.

It carries out the reaction NAD(+) + (deoxyribonucleotide)n-3'-hydroxyl + 5'-phospho-(deoxyribonucleotide)m = (deoxyribonucleotide)n+m + AMP + beta-nicotinamide D-nucleotide.. Its function is as follows. DNA ligase that catalyzes the formation of phosphodiester linkages between 5'-phosphoryl and 3'-hydroxyl groups in double-stranded DNA using NAD as a coenzyme and as the energy source for the reaction. It is essential for DNA replication and repair of damaged DNA. The polypeptide is DNA ligase (Enterobacter sp. (strain 638)).